The following is a 341-amino-acid chain: Uroporphyrinogen decarboxylase (341 aa).

Residues 23–27 (RQAGR), Asp73, Tyr148, Ser203, and His318 contribute to the substrate site.

The protein belongs to the uroporphyrinogen decarboxylase family. Homodimer.

The protein localises to the cytoplasm. The catalysed reaction is uroporphyrinogen III + 4 H(+) = coproporphyrinogen III + 4 CO2. The protein operates within porphyrin-containing compound metabolism; protoporphyrin-IX biosynthesis; coproporphyrinogen-III from 5-aminolevulinate: step 4/4. Catalyzes the decarboxylation of four acetate groups of uroporphyrinogen-III to yield coproporphyrinogen-III. The protein is Uroporphyrinogen decarboxylase of Brucella suis (strain ATCC 23445 / NCTC 10510).